The primary structure comprises 294 residues: Oligopeptide transport system permease protein OppC (294 aa).

The next 6 membrane-spanning stretches (helical) occupy residues 27-47 (MISTIFLVAVFLIVYIYSMFL), 94-114 (IAFAVTLITLVVGNILGVITG), 127-147 (FTDFVMILPSMMIIIVFVTII), 151-171 (NSWSLIGIISIFSWIGTTRLI), 202-224 (IWPNLSTLVIAEATLVFAGNIGL), and 260-280 (WTWVPATVVILIVVLAIIFIG). The ABC transmembrane type-1 domain occupies 88–280 (ARNSFNIAFA…IVVLAIIFIG (193 aa)).

Belongs to the binding-protein-dependent transport system permease family. OppBC subfamily. As to quaternary structure, the complex is composed of two ATP-binding proteins (OppD and OppF), two transmembrane proteins (OppB and OppC) and a solute-binding protein (OppA).

The protein localises to the cell membrane. Part of the ABC transporter complex OppABCDF involved in the uptake of oligopeptides. Probably responsible for the translocation of the substrate across the membrane. This Lactococcus lactis subsp. cremoris (strain SK11) protein is Oligopeptide transport system permease protein OppC.